Here is a 116-residue protein sequence, read N- to C-terminus: Large ribosomal subunit protein bL19 (116 aa).

Belongs to the bacterial ribosomal protein bL19 family.

This protein is located at the 30S-50S ribosomal subunit interface and may play a role in the structure and function of the aminoacyl-tRNA binding site. The protein is Large ribosomal subunit protein bL19 of Fusobacterium nucleatum subsp. nucleatum (strain ATCC 25586 / DSM 15643 / BCRC 10681 / CIP 101130 / JCM 8532 / KCTC 2640 / LMG 13131 / VPI 4355).